Here is a 476-residue protein sequence, read N- to C-terminus: Adenosylhomocysteinase (476 aa).

Substrate contacts are provided by Thr65, Asp140, and Glu201. 202 to 204 (TTT) contributes to the NAD(+) binding site. Residues Lys231 and Asp235 each contribute to the substrate site. NAD(+)-binding positions include Asn236, 265–270 (GYGDVG), Glu288, Asn323, 344–346 (IGH), and Asn392.

It belongs to the adenosylhomocysteinase family. It depends on NAD(+) as a cofactor.

The protein localises to the cytoplasm. It carries out the reaction S-adenosyl-L-homocysteine + H2O = L-homocysteine + adenosine. It functions in the pathway amino-acid biosynthesis; L-homocysteine biosynthesis; L-homocysteine from S-adenosyl-L-homocysteine: step 1/1. Its function is as follows. May play a key role in the regulation of the intracellular concentration of adenosylhomocysteine. The polypeptide is Adenosylhomocysteinase (Bacteroides thetaiotaomicron (strain ATCC 29148 / DSM 2079 / JCM 5827 / CCUG 10774 / NCTC 10582 / VPI-5482 / E50)).